Reading from the N-terminus, the 276-residue chain is Large ribosomal subunit protein uL2 (276 aa).

A disordered region spans residues 221–276 (RGSAMNPNDHPHGGGEGRAPIGRKSPMTPWGKKARGIKTRDRKKSSNELIIRRRTK). A compositionally biased stretch (basic residues) spans 252–263 (KKARGIKTRDRK).

Belongs to the universal ribosomal protein uL2 family. As to quaternary structure, part of the 50S ribosomal subunit. Forms a bridge to the 30S subunit in the 70S ribosome.

One of the primary rRNA binding proteins. Required for association of the 30S and 50S subunits to form the 70S ribosome, for tRNA binding and peptide bond formation. It has been suggested to have peptidyltransferase activity; this is somewhat controversial. Makes several contacts with the 16S rRNA in the 70S ribosome. This is Large ribosomal subunit protein uL2 from Phytoplasma australiense.